We begin with the raw amino-acid sequence, 377 residues long: Queuine tRNA-ribosyltransferase (377 aa).

Aspartate 89 functions as the Proton acceptor in the catalytic mechanism. Substrate contacts are provided by residues 89 to 93 (DSGGF), aspartate 143, glutamine 187, and glycine 214. Residues 245-251 (GVGKPED) are RNA binding. The active-site Nucleophile is the aspartate 264. Residues 269–273 (TRNAR) form an RNA binding; important for wobble base 34 recognition region. Zn(2+)-binding residues include cysteine 302, cysteine 304, cysteine 307, and histidine 333.

Belongs to the queuine tRNA-ribosyltransferase family. As to quaternary structure, homodimer. Within each dimer, one monomer is responsible for RNA recognition and catalysis, while the other monomer binds to the replacement base PreQ1. Zn(2+) serves as cofactor.

It catalyses the reaction 7-aminomethyl-7-carbaguanine + guanosine(34) in tRNA = 7-aminomethyl-7-carbaguanosine(34) in tRNA + guanine. It participates in tRNA modification; tRNA-queuosine biosynthesis. Catalyzes the base-exchange of a guanine (G) residue with the queuine precursor 7-aminomethyl-7-deazaguanine (PreQ1) at position 34 (anticodon wobble position) in tRNAs with GU(N) anticodons (tRNA-Asp, -Asn, -His and -Tyr). Catalysis occurs through a double-displacement mechanism. The nucleophile active site attacks the C1' of nucleotide 34 to detach the guanine base from the RNA, forming a covalent enzyme-RNA intermediate. The proton acceptor active site deprotonates the incoming PreQ1, allowing a nucleophilic attack on the C1' of the ribose to form the product. After dissociation, two additional enzymatic reactions on the tRNA convert PreQ1 to queuine (Q), resulting in the hypermodified nucleoside queuosine (7-(((4,5-cis-dihydroxy-2-cyclopenten-1-yl)amino)methyl)-7-deazaguanosine). This Shewanella denitrificans (strain OS217 / ATCC BAA-1090 / DSM 15013) protein is Queuine tRNA-ribosyltransferase.